Consider the following 454-residue polypeptide: MPEAFERYSSNPTYEPPWRKVRFIGIAGPSGSGKTSVAQLIVKALNLPHVVILSLDSFYKSLNAEQKKRAFNNDYDFDSPEAIDWDLLFVKLLELKQGRKVDIPIYSFNEHNRLPETNTLFGASIIILEGIFALYDEKIRSLLDVSVFLDTDSDVCLSRRLNRDINYRGRDIVGVLEQYNKFVKPSYENFVRRQLSYTDLIVPRGRDNKLAIDMVINFIRRTLSIQSETHVKNIDSLQQIVPTIPHLPLNLVQLKITPEISAIRTILINKNTHPDDLQFFLSRIGTMLMNLAGDSLAYEKKTITLHNGNQWEGLQMAKELCGVSVLRSGGTLETALCRQFPTVCLGKILVQINKVTQEPTLHYHKLPRGIATMNVVLMASHLTTHADVLMATQILVDFGVPEENIIIVVYVCYSESIKALAYIFPKVTIVTAFLESVAEPVVGRLDIEKVYYGC.

28-35 serves as a coordination point for ATP; it reads GPSGSGKT.

This sequence belongs to the uridine kinase family.

It is found in the cytoplasm. It localises to the nucleus. It carries out the reaction uridine + ATP = UMP + ADP + H(+). The enzyme catalyses cytidine + ATP = CMP + ADP + H(+). The protein operates within pyrimidine metabolism; CTP biosynthesis via salvage pathway; CTP from cytidine: step 1/3. Its pathway is pyrimidine metabolism; UMP biosynthesis via salvage pathway; UMP from uridine: step 1/1. In terms of biological role, catalyzes the conversion of uridine into UMP and cytidine into CMP in the pyrimidine salvage pathway. In Schizosaccharomyces pombe (strain 972 / ATCC 24843) (Fission yeast), this protein is Uridine kinase (urk1).